A 153-amino-acid chain; its full sequence is NADPH-dependent 7-cyano-7-deazaguanine reductase (153 aa).

Polar residues predominate over residues 1–17; sequence MTDTRNLTQLGSKTQAP. A disordered region spans residues 1–23; sequence MTDTRNLTQLGSKTQAPASPEAA. The active-site Thioimide intermediate is cysteine 51. Catalysis depends on aspartate 58, which acts as the Proton donor. Substrate contacts are provided by residues 73-75 and 92-93; these read VES and HE.

It belongs to the GTP cyclohydrolase I family. QueF type 1 subfamily.

Its subcellular location is the cytoplasm. It catalyses the reaction 7-aminomethyl-7-carbaguanine + 2 NADP(+) = 7-cyano-7-deazaguanine + 2 NADPH + 3 H(+). The protein operates within tRNA modification; tRNA-queuosine biosynthesis. Functionally, catalyzes the NADPH-dependent reduction of 7-cyano-7-deazaguanine (preQ0) to 7-aminomethyl-7-deazaguanine (preQ1). This Chelativorans sp. (strain BNC1) protein is NADPH-dependent 7-cyano-7-deazaguanine reductase.